The chain runs to 245 residues: Type II restriction enzyme MjaIV (245 aa).

It catalyses the reaction Endonucleolytic cleavage of DNA to give specific double-stranded fragments with terminal 5'-phosphates.. Functionally, a P subtype restriction enzyme that recognizes the double-stranded sequence 5'-GTNNAC-3'; the cleavage site is unknown. This is Type II restriction enzyme MjaIV (mjaIVR) from Methanocaldococcus jannaschii (strain ATCC 43067 / DSM 2661 / JAL-1 / JCM 10045 / NBRC 100440) (Methanococcus jannaschii).